The following is a 581-amino-acid chain: Protein SPT2 homolog (581 aa).

The segment covering 26–35 has biased composition (low complexity); that stretch reads YYSTKYSPPK. Disordered stretches follow at residues 26 to 50 and 145 to 495; these read YYSTKYSPPKKQSKESKQLSSNIQK and QEDK…EYDS. A coiled-coil region spans residues 36–76; it reads KQSKESKQLSSNIQKFLQKKEAEEAEKKRLERQKLNDLLAK. Residues 162-181 are compositionally biased toward basic and acidic residues; it reads SGTKERVKAAITREREEAKG. Composition is skewed to polar residues over residues 182–197 and 204–213; these read NTRQKSSTSTLPSSAT and VARSYSTSKT. Composition is skewed to basic and acidic residues over residues 218–236 and 256–312; these read NAEKLEEERKKRQEEEQRR and LAEK…KETP. A coiled-coil region spans residues 276–307; that stretch reads ERLLSAREKRELEERQRQQEQRAQRLKMRESE. Over residues 352 to 376 the composition is skewed to low complexity; it reads SSASSTSLSSSNSHSSASRSSVSSS. The span at 447 to 461 shows a compositional bias: polar residues; it reads TRQTPSSDVQRSQGG. A compositionally biased stretch (acidic residues) spans 486–495; the sequence is DDDDEDEYDS.

The protein belongs to the SPT2 family.

The polypeptide is Protein SPT2 homolog (Drosophila melanogaster (Fruit fly)).